The chain runs to 286 residues: Pyridoxal kinase PdxY (286 aa).

Residues Ser-9 and 44–45 (TQ) contribute to the substrate site. Positions 111, 148, and 181 each coordinate ATP. Asp-222 lines the substrate pocket.

This sequence belongs to the pyridoxine kinase family. PdxY subfamily. In terms of assembly, homodimer. Mg(2+) serves as cofactor.

The catalysed reaction is pyridoxal + ATP = pyridoxal 5'-phosphate + ADP + H(+). Its pathway is cofactor metabolism; pyridoxal 5'-phosphate salvage; pyridoxal 5'-phosphate from pyridoxal: step 1/1. Its function is as follows. Pyridoxal kinase involved in the salvage pathway of pyridoxal 5'-phosphate (PLP). Catalyzes the phosphorylation of pyridoxal to PLP. This is Pyridoxal kinase PdxY from Actinobacillus pleuropneumoniae serotype 5b (strain L20).